Reading from the N-terminus, the 108-residue chain is UPF0060 membrane protein Sputw3181_1172 (108 aa).

4 helical membrane passes run 3–23, 31–51, 63–83, and 87–107; these read VITT…GCYL, GASA…AWLL, AAYG…VDGI, and RWDL…MFAP.

The protein belongs to the UPF0060 family.

It localises to the cell inner membrane. In Shewanella sp. (strain W3-18-1), this protein is UPF0060 membrane protein Sputw3181_1172.